Consider the following 226-residue polypeptide: Glycerol-3-phosphate acyltransferase (226 aa).

A run of 6 helical transmembrane segments spans residues 1-21 (MGFW…LGSF), 60-80 (FVLG…YYLF), 102-122 (LVTL…FLGF), 134-154 (ILLA…AVVV), 159-178 (IVSL…MVFL), and 182-197 (LPYI…YVIL).

It belongs to the PlsY family. As to quaternary structure, probably interacts with PlsX.

Its subcellular location is the cell inner membrane. The catalysed reaction is an acyl phosphate + sn-glycerol 3-phosphate = a 1-acyl-sn-glycero-3-phosphate + phosphate. The protein operates within lipid metabolism; phospholipid metabolism. Catalyzes the transfer of an acyl group from acyl-phosphate (acyl-PO(4)) to glycerol-3-phosphate (G3P) to form lysophosphatidic acid (LPA). This enzyme utilizes acyl-phosphate as fatty acyl donor, but not acyl-CoA or acyl-ACP. The sequence is that of Glycerol-3-phosphate acyltransferase from Nostoc sp. (strain PCC 7120 / SAG 25.82 / UTEX 2576).